Reading from the N-terminus, the 294-residue chain is sn-glycerol-3-phosphate transport system permease protein UgpA (294 aa).

The Cytoplasmic segment spans residues 1–11; sequence MSPSRPGFSCS. The chain crosses the membrane as a helical span at residues 12-32; it reads WLPYLLVLPQLAITAIFFLWP. The Periplasmic segment spans residues 33–80; it reads AGEALWYSVQTLDPFGLSSEFVGLSNFIQLFQDEYYLASFYTTLIFSA. The ABC transmembrane type-1 domain occupies 72 to 284; it reads FYTTLIFSAL…LLVIGLTVIQ (213 aa). The chain crosses the membrane as a helical span at residues 81–101; the sequence is LVAGIGLNVSLFLAAMVDYVL. At 102 to 109 the chain is on the cytoplasmic side; it reads RGSRLYQT. The chain crosses the membrane as a helical span at residues 110–130; the sequence is LLILPYAVAPAVAAVLWIFLF. Topologically, residues 131 to 157 are periplasmic; sequence DPGLGLITHALAKLGYSWNHAQNSGQA. A helical transmembrane segment spans residues 158-178; it reads MFLVVLASVWKQISYNFLFFL. At 179 to 207 the chain is on the cytoplasmic side; it reads AALQSIPKSLVEAAAIDGAGPVRRFFNLV. The helical transmembrane segment at 208–228 threads the bilayer; sequence LPLISPVSFFLLVVNLVYAFF. The Periplasmic segment spans residues 229-262; the sequence is DTFPVIDAATGGGPVQATTTLIYKIYREGFAGLD. A helical transmembrane segment spans residues 263-283; it reads LSSSAAQSVILMLLVIGLTVI. Topologically, residues 284 to 294 are cytoplasmic; it reads QFRFVERKVRY.

This sequence belongs to the binding-protein-dependent transport system permease family. UgpAE subfamily. As to quaternary structure, the complex is composed of two ATP-binding proteins (UgpC), two transmembrane proteins (UgpA and UgpE) and a solute-binding protein (UgpB).

The protein resides in the cell inner membrane. In terms of biological role, part of the ABC transporter complex UgpBAEC involved in sn-glycerol-3-phosphate (G3P) import. Probably responsible for the translocation of the substrate across the membrane. This is sn-glycerol-3-phosphate transport system permease protein UgpA (ugpA) from Yersinia pseudotuberculosis serotype I (strain IP32953).